Here is a 191-residue protein sequence, read N- to C-terminus: Endoribonuclease YbeY (191 aa).

Zn(2+) contacts are provided by histidine 122, histidine 126, and histidine 132. The segment at 164–191 (QPKPSGPKAFPDAAERAELDKEVPGGGI) is disordered. A compositionally biased stretch (basic and acidic residues) spans 176–191 (AAERAELDKEVPGGGI).

Belongs to the endoribonuclease YbeY family. Requires Zn(2+) as cofactor.

Its subcellular location is the cytoplasm. Functionally, single strand-specific metallo-endoribonuclease involved in late-stage 70S ribosome quality control and in maturation of the 3' terminus of the 16S rRNA. The protein is Endoribonuclease YbeY of Corynebacterium aurimucosum (strain ATCC 700975 / DSM 44827 / CIP 107346 / CN-1) (Corynebacterium nigricans).